The sequence spans 425 residues: Multifunctional CCA protein (425 aa).

G8 and R11 together coordinate ATP. CTP contacts are provided by G8 and R11. Residues E21 and D23 each contribute to the Mg(2+) site. ATP contacts are provided by R91, R137, and R140. Residues R91, R137, and R140 each contribute to the CTP site. Residues 228–329 (TGVHTLMVLD…VDLLDRLGAL (102 aa)) enclose the HD domain.

This sequence belongs to the tRNA nucleotidyltransferase/poly(A) polymerase family. Bacterial CCA-adding enzyme type 1 subfamily. Monomer. Can also form homodimers and oligomers. Requires Mg(2+) as cofactor. Ni(2+) is required as a cofactor.

The catalysed reaction is a tRNA precursor + 2 CTP + ATP = a tRNA with a 3' CCA end + 3 diphosphate. The enzyme catalyses a tRNA with a 3' CCA end + 2 CTP + ATP = a tRNA with a 3' CCACCA end + 3 diphosphate. Its function is as follows. Catalyzes the addition and repair of the essential 3'-terminal CCA sequence in tRNAs without using a nucleic acid template. Adds these three nucleotides in the order of C, C, and A to the tRNA nucleotide-73, using CTP and ATP as substrates and producing inorganic pyrophosphate. tRNA 3'-terminal CCA addition is required both for tRNA processing and repair. Also involved in tRNA surveillance by mediating tandem CCA addition to generate a CCACCA at the 3' terminus of unstable tRNAs. While stable tRNAs receive only 3'-terminal CCA, unstable tRNAs are marked with CCACCA and rapidly degraded. This chain is Multifunctional CCA protein, found in Methylococcus capsulatus (strain ATCC 33009 / NCIMB 11132 / Bath).